Reading from the N-terminus, the 201-residue chain is Potassium-transporting ATPase KdpC subunit (201 aa).

The chain crosses the membrane as a helical span at residues 17–37 (LLTGLAYPLAMTGLAGILFPV).

This sequence belongs to the KdpC family. In terms of assembly, the system is composed of three essential subunits: KdpA, KdpB and KdpC.

The protein localises to the cell inner membrane. In terms of biological role, part of the high-affinity ATP-driven potassium transport (or Kdp) system, which catalyzes the hydrolysis of ATP coupled with the electrogenic transport of potassium into the cytoplasm. This subunit acts as a catalytic chaperone that increases the ATP-binding affinity of the ATP-hydrolyzing subunit KdpB by the formation of a transient KdpB/KdpC/ATP ternary complex. The protein is Potassium-transporting ATPase KdpC subunit of Methylobacterium nodulans (strain LMG 21967 / CNCM I-2342 / ORS 2060).